A 314-amino-acid polypeptide reads, in one-letter code: 3'-5' exoribonuclease YhaM (314 aa).

An HD domain is found at 163–279; that stretch reads HVVSMLDLAK…LHYIDNLDAK (117 aa).

It belongs to the YhaM family.

In terms of biological role, shows a 3'-5' exoribonuclease activity. This is 3'-5' exoribonuclease YhaM from Bacillus cereus (strain AH187).